The following is a 191-amino-acid chain: Small ribosomal subunit protein uS7 (191 aa).

A disordered region spans residues 56-80; it reads NKSGEQGDGDGESGGKAGGIKKRSL.

It belongs to the universal ribosomal protein uS7 family. In terms of assembly, part of the 30S ribosomal subunit. Contacts proteins S9 and S11.

One of the primary rRNA binding proteins, it binds directly to 16S rRNA where it nucleates assembly of the head domain of the 30S subunit. Is located at the subunit interface close to the decoding center, probably blocks exit of the E-site tRNA. The protein is Small ribosomal subunit protein uS7 of Coxiella burnetii (strain RSA 493 / Nine Mile phase I).